Consider the following 1444-residue polypeptide: Protein shortage in chiasmata 1 ortholog (1444 aa).

Over residues 1106-1117 the composition is skewed to low complexity; it reads SITKSPQISSPQ. The segment at 1106–1129 is disordered; sequence SITKSPQISSPQENRNQISTLSSQ.

It belongs to the XPF family. Highly divergent. As to quaternary structure, interacts with TEX11. Interacts with SPO16.

The protein resides in the chromosome. ATPase required during meiosis for the formation of crossover recombination intermediates. Binds DNA: preferentially binds to single-stranded DNA and DNA branched structures. Does not show nuclease activity in vitro, but shows ATPase activity, which is stimulated by the presence of single-stranded DNA. Plays a key role in homologous recombination and crossing-over in meiotic prophase I in male and female germ cells. Required for proper synaptonemal complex assembly and homologous chromosome pairing. Requiref for recruitment TEX11 and MSH4 to recombination intermediates. In Homo sapiens (Human), this protein is Protein shortage in chiasmata 1 ortholog.